Reading from the N-terminus, the 387-residue chain is Exodeoxyribonuclease 7 large subunit (387 aa).

It belongs to the XseA family. In terms of assembly, heterooligomer composed of large and small subunits.

It localises to the cytoplasm. It catalyses the reaction Exonucleolytic cleavage in either 5'- to 3'- or 3'- to 5'-direction to yield nucleoside 5'-phosphates.. Functionally, bidirectionally degrades single-stranded DNA into large acid-insoluble oligonucleotides, which are then degraded further into small acid-soluble oligonucleotides. In Campylobacter jejuni subsp. jejuni serotype O:2 (strain ATCC 700819 / NCTC 11168), this protein is Exodeoxyribonuclease 7 large subunit.